The chain runs to 92 residues: Small ribosomal subunit protein uS17 (92 aa).

This sequence belongs to the universal ribosomal protein uS17 family. Part of the 30S ribosomal subunit.

One of the primary rRNA binding proteins, it binds specifically to the 5'-end of 16S ribosomal RNA. The chain is Small ribosomal subunit protein uS17 from Wigglesworthia glossinidia brevipalpis.